The primary structure comprises 88 residues: LYR motif-containing protein 2 (88 aa).

The transit peptide at methionine 1–arginine 19 directs the protein to the mitochondrion.

The protein belongs to the complex I LYR family.

It localises to the mitochondrion. Involved in efficient integration of the N-module into mitochondrial respiratory chain complex I. This chain is LYR motif-containing protein 2 (LYRM2), found in Homo sapiens (Human).